A 105-amino-acid polypeptide reads, in one-letter code: MAKVHVRKKDTVMIISGKDKGKTGEVLAVMPKVSKVLVSGINIVSKHQKPNKQNMEGGIIRKEAAIYSSKVMLYCEKCKSVTRISHKILEDGTKVRVCKKCGETL.

The protein belongs to the universal ribosomal protein uL24 family. Part of the 50S ribosomal subunit.

In terms of biological role, one of two assembly initiator proteins, it binds directly to the 5'-end of the 23S rRNA, where it nucleates assembly of the 50S subunit. Its function is as follows. One of the proteins that surrounds the polypeptide exit tunnel on the outside of the subunit. The sequence is that of Large ribosomal subunit protein uL24 from Clostridium kluyveri (strain ATCC 8527 / DSM 555 / NBRC 12016 / NCIMB 10680 / K1).